The primary structure comprises 593 residues: Efflux pump FUB11 (593 aa).

The disordered stretch occupies residues 1-45 (MAIDPQPSSPSLSSETIANDTIGNDNNVNEPSVEPKTQEHQHTVP). A compositionally biased stretch (polar residues) spans 9–30 (SPSLSSETIANDTIGNDNNVNE). A glycan (N-linked (GlcNAc...) asparagine) is linked at asparagine 19. 12 consecutive transmembrane segments (helical) span residues 98–118 (WAFV…SSAY), 135–155 (VATL…LVWA), 167–187 (FFFT…AGSI), 195–215 (FLTG…IADM), 227–247 (MFSG…GFLG), 254–274 (WLHG…TVFI), 337–357 (IYIS…PIVF), 367–387 (IGGL…ISFA), 410–430 (LPPA…FAWT), 438–458 (IVPI…FMAL), 468–488 (IFAA…GAAF), and 503–523 (WASS…FLFY). Residues 570–593 (THNSHASAAHSHGHRRSLSYTRSA) are disordered.

This sequence belongs to the major facilitator superfamily. DHA1 family. Polyamines/proton antiporter (TC 2.A.1.2.16) subfamily.

The protein resides in the cell membrane. Efflux pump involved in export of fusaric acid, a mycotoxin with low to moderate toxicity to animals and humans, but with high phytotoxic properties. Constitutes a self-protecting mechanism of the fungus against critical levels of FSA within the cell. In Gibberella moniliformis (strain M3125 / FGSC 7600) (Maize ear and stalk rot fungus), this protein is Efflux pump FUB11.